The primary structure comprises 100 residues: Urease subunit gamma (100 aa).

Belongs to the urease gamma subunit family. As to quaternary structure, heterotrimer of UreA (gamma), UreB (beta) and UreC (alpha) subunits. Three heterotrimers associate to form the active enzyme.

Its subcellular location is the cytoplasm. The enzyme catalyses urea + 2 H2O + H(+) = hydrogencarbonate + 2 NH4(+). It participates in nitrogen metabolism; urea degradation; CO(2) and NH(3) from urea (urease route): step 1/1. This Thioalkalivibrio sulfidiphilus (strain HL-EbGR7) protein is Urease subunit gamma.